A 275-amino-acid chain; its full sequence is Small ribosomal subunit protein uS3 (275 aa).

The KH type-2 domain occupies 38-106 (IRKLLATGLE…QVQLNILEVK (69 aa)). The tract at residues 215–275 (AAAAPASDRP…AEAPAESTES (61 aa)) is disordered. Positions 237-275 (SGSAGTTATSTEAGRAATSDAPAAGTAAAAEAPAESTES) are enriched in low complexity.

The protein belongs to the universal ribosomal protein uS3 family. Part of the 30S ribosomal subunit. Forms a tight complex with proteins S10 and S14.

Binds the lower part of the 30S subunit head. Binds mRNA in the 70S ribosome, positioning it for translation. This is Small ribosomal subunit protein uS3 from Mycolicibacterium smegmatis (strain ATCC 700084 / mc(2)155) (Mycobacterium smegmatis).